Consider the following 225-residue polypeptide: Ribonuclease 3 (225 aa).

The RNase III domain maps to 5 to 127 (LERLQRQIGY…IIGAISLDSD (123 aa)). Position 40 (Glu40) interacts with Mg(2+). Asp44 is a catalytic residue. Mg(2+) is bound by residues Asp113 and Glu116. Glu116 is a catalytic residue. One can recognise a DRBM domain in the interval 154–224 (DPKTRLQEYL…AEKILQLLEM (71 aa)).

It belongs to the ribonuclease III family. As to quaternary structure, homodimer. The cofactor is Mg(2+).

It localises to the cytoplasm. The catalysed reaction is Endonucleolytic cleavage to 5'-phosphomonoester.. Its function is as follows. Digests double-stranded RNA. Involved in the processing of primary rRNA transcript to yield the immediate precursors to the large and small rRNAs (23S and 16S). Also processes some mRNAs, and tRNAs when they are encoded in the rRNA operon. Functionally, CRISPR (clustered regularly interspaced short palindromic repeat) is an adaptive immune system that provides protection against mobile genetic elements (viruses, transposable elements and conjugative plasmids). CRISPR clusters contain spacers, sequences complementary to antecedent mobile elements, and target invading nucleic acids. CRISPR clusters are transcribed and processed into CRISPR RNA (crRNA). In this organism endogenous ribonuclease 3 and Cas9 are required for correct coprocessing of pre-crRNA and the trans-encoded small RNA (tracrRNA). Cas9, crRNA and tracrRNA are required for cleavage of invading DNA. Complements pre-crRNA and tracrRNA coprocessing defects in an rnc deletion in S.pyogenes strain 370. The polypeptide is Ribonuclease 3 (Pasteurella multocida (strain Pm70)).